A 156-amino-acid polypeptide reads, in one-letter code: Arginine repressor (156 aa).

This sequence belongs to the ArgR family.

It is found in the cytoplasm. It functions in the pathway amino-acid biosynthesis; L-arginine biosynthesis [regulation]. Functionally, regulates arginine biosynthesis genes. The sequence is that of Arginine repressor from Salmonella agona (strain SL483).